A 152-amino-acid polypeptide reads, in one-letter code: Transcriptional regulator MraZ (152 aa).

SpoVT-AbrB domains follow at residues 5 to 52 and 81 to 124; these read ATLV…PLPE and ASEC…DETT.

This sequence belongs to the MraZ family. In terms of assembly, forms oligomers.

It localises to the cytoplasm. It is found in the nucleoid. Negatively regulates its own expression and that of the subsequent genes in the proximal part of the division and cell wall (dcw) gene cluster. Acts by binding directly to DNA. May also regulate the expression of genes outside the dcw cluster. This chain is Transcriptional regulator MraZ, found in Salmonella gallinarum (strain 287/91 / NCTC 13346).